The following is a 661-amino-acid chain: MANRSIRDGDNPELLEERRMATFDTDKMAAVIYGSEEFARRRREITDAVSKIPELADIKPYPFLTREEKVTEGTRKISILTKYLNQLIDRDNEEESLHLHREVIGYEGHPFALHDALFIPTLQSQASDEQQEKWLERARRREIIGCYAQTELGHGSNLRNLETTAVYDIASQEFVLHTPTTTALKWWPGALGKSCNYALVVAELIIKRNNYGPHFFMVQLRDEKTHIPLKGVTVGDIGPKMNFNAADNGYLGLNNLRVPRTNLLMRHCKVEADGTYVKPPHAKIGYSGMVKIRSQMAMEQGLFLAHALTIAARYSAVRRQGHLDDKQVEVKVLDYQTQQHRLFPSLARAYAFIFTGFETIHLYSQLLKDVDMGNTSGMADLHALTSGLKSVVAHETGEGIEQARMACGGHGYSMASYISVVYGIAIGGCTYEGENMVMLLQLARYLVKSVELIKAGKAKKLGPVASYLADKSDETDLTSLNGYVKMFENMARRQAWKATEKFLKLMESGESREVAWNKSAVELTRASRLHTRLFIIEAFMRRVSRIEDIPVKEVLTDLLHLHVNYELLDVATYALEFMSFTQLDYVRDQLYLYLEKIRPNAVSLVDSFQISDMQLRSVLGRRDGHVYENLFKWAKSSPLNNADVLPSVEKYLKPMMEKAKL.

Residues 147-150 (YAQT), 155-156 (GS), and Gly189 each bind FAD. Substrate-binding positions include 283-286 (KIGY) and Arg293. FAD-binding positions include Arg318 and 338-341 (QQHR). The ATP site is built by His340, Ser390, His394, and Gln402. Gly409 is a binding site for FAD. A substrate-binding site is contributed by 431–432 (YE). The active-site Proton acceptor is Glu432. Position 434 (Glu434) interacts with FAD. Residues 525-528 (RASR) and Tyr573 each bind ATP. The short motif at 659–661 (AKL) is the Microbody targeting signal element.

The protein belongs to the acyl-CoA oxidase family. In terms of assembly, homodimer. Forms a heterodimer with acox-1.1. FAD serves as cofactor.

Its subcellular location is the peroxisome. The enzyme catalyses asc-omegaC5-CoA + O2 = asc-omegaDeltaC5-CoA + H2O2. It participates in lipid metabolism; peroxisomal fatty acid beta-oxidation. With respect to regulation, activated by ATP. ATP binding leads to a conformational change that promotes FAD cofactor binding and enzyme activity. ATP binding likely occurs during acox-1.2 folding and/or dimer formation. The preference for processing substrates with shorter fatty acid chains is likely due to the closed conformation of the active site. Functionally, involved in the first step of peroxisomal beta-oxidation by catalyzing the desaturation of fatty acid-derived side chains of ascaroside pheromones, which regulates development and behavior. Specifically, shortens ascarosides with 5-carbon omega side chain (asc-omega-C5). Does not shorten indol-3-carbonyl(IC)-ascaroside with 7-carbon or 9-carbon side chains. Does not catalyze the desaturation of fatty acids or hydroxylated fatty acids. The sequence is that of Acyl-coenzyme A oxidase acox-1.2 from Caenorhabditis elegans.